Here is a 785-residue protein sequence, read N- to C-terminus: Tripartite terminase subunit 1 (785 aa).

The C3H1-type zinc finger occupies 201–229 (CAVCFEELCVTANQGATIARRLADRICNH). A disordered region spans residues 439–487 (GGATGGAEEEEPRAAAEEGGRRRGAGTPASEDGERGPEPGAQGPESWGD). The segment covering 450–459 (PRAAAEEGGR) has biased composition (basic and acidic residues). Residue 696 to 703 (FASVYRCG) coordinates ATP.

The protein belongs to the herpesviridae TRM1 protein family. In terms of assembly, associates with TRM2 and TRM3 to form the tripartite terminase complex. Interacts with portal protein.

The protein resides in the host nucleus. Its function is as follows. Component of the molecular motor that translocates viral genomic DNA in empty capsid during DNA packaging. Forms a tripartite terminase complex together with TRM2 and TRM3 in the host cytoplasm. Once the complex reaches the host nucleus, it interacts with the capsid portal vertex. This portal forms a ring in which genomic DNA is translocated into the capsid. TRM1 carries an endonuclease activity that plays an important role for the cleavage of concatemeric viral DNA into unit length genomes. The polypeptide is Tripartite terminase subunit 1 (Human herpesvirus 2 (strain HG52) (HHV-2)).